We begin with the raw amino-acid sequence, 338 residues long: Lipoyl synthase (338 aa).

Residues 1-22 form a disordered region; the sequence is MTTVQEAVPNLIPTQDVTPRPA. [4Fe-4S] cluster-binding residues include cysteine 84, cysteine 89, cysteine 95, cysteine 110, cysteine 114, cysteine 117, and serine 324. Residues 96 to 313 enclose the Radical SAM core domain; it reads FSGGTATFMI…AEEGYKMGFK (218 aa).

It belongs to the radical SAM superfamily. Lipoyl synthase family. The cofactor is [4Fe-4S] cluster.

It localises to the cytoplasm. It catalyses the reaction [[Fe-S] cluster scaffold protein carrying a second [4Fe-4S](2+) cluster] + N(6)-octanoyl-L-lysyl-[protein] + 2 oxidized [2Fe-2S]-[ferredoxin] + 2 S-adenosyl-L-methionine + 4 H(+) = [[Fe-S] cluster scaffold protein] + N(6)-[(R)-dihydrolipoyl]-L-lysyl-[protein] + 4 Fe(3+) + 2 hydrogen sulfide + 2 5'-deoxyadenosine + 2 L-methionine + 2 reduced [2Fe-2S]-[ferredoxin]. It participates in protein modification; protein lipoylation via endogenous pathway; protein N(6)-(lipoyl)lysine from octanoyl-[acyl-carrier-protein]: step 2/2. Catalyzes the radical-mediated insertion of two sulfur atoms into the C-6 and C-8 positions of the octanoyl moiety bound to the lipoyl domains of lipoate-dependent enzymes, thereby converting the octanoylated domains into lipoylated derivatives. The sequence is that of Lipoyl synthase from Pseudomonas entomophila (strain L48).